The following is a 272-amino-acid chain: Putative pyruvate, phosphate dikinase regulatory protein (272 aa).

Residue 154–161 (GVSRTSKS) coordinates ADP.

This sequence belongs to the pyruvate, phosphate/water dikinase regulatory protein family. PDRP subfamily.

The enzyme catalyses N(tele)-phospho-L-histidyl/L-threonyl-[pyruvate, phosphate dikinase] + ADP = N(tele)-phospho-L-histidyl/O-phospho-L-threonyl-[pyruvate, phosphate dikinase] + AMP + H(+). It carries out the reaction N(tele)-phospho-L-histidyl/O-phospho-L-threonyl-[pyruvate, phosphate dikinase] + phosphate + H(+) = N(tele)-phospho-L-histidyl/L-threonyl-[pyruvate, phosphate dikinase] + diphosphate. Its function is as follows. Bifunctional serine/threonine kinase and phosphorylase involved in the regulation of the pyruvate, phosphate dikinase (PPDK) by catalyzing its phosphorylation/dephosphorylation. This is Putative pyruvate, phosphate dikinase regulatory protein from Wolbachia pipientis subsp. Culex pipiens (strain wPip).